A 247-amino-acid chain; its full sequence is Carboxy-S-adenosyl-L-methionine synthase (247 aa).

S-adenosyl-L-methionine-binding positions include tyrosine 39, 64–66 (GCS), 89–90 (DN), 117–118 (DI), asparagine 132, and arginine 199.

Belongs to the class I-like SAM-binding methyltransferase superfamily. Cx-SAM synthase family. In terms of assembly, homodimer.

The catalysed reaction is prephenate + S-adenosyl-L-methionine = carboxy-S-adenosyl-L-methionine + 3-phenylpyruvate + H2O. Catalyzes the conversion of S-adenosyl-L-methionine (SAM) to carboxy-S-adenosyl-L-methionine (Cx-SAM). In Shigella boydii serotype 4 (strain Sb227), this protein is Carboxy-S-adenosyl-L-methionine synthase.